We begin with the raw amino-acid sequence, 296 residues long: MPELPEVETVKRGLAPAIEGALLVRAELRRPDLRFPFPENFAAAVSGRRILALSRRAKYLMIDLEGGDVIVAHLGMSGSFRIEAGAQPAAPGEFHHPRGKDEKHDHVIFHLDGGSGQMRVIYNDPRRFGFMDLARRDTIAEHAYFRDLGEEPTGNALDAAYLAARLAGKSQPLKTALLDQRTIAGLGNIYVCEALWRSGLSPNRAAGTLVDKRGRPKQALLALVEAIRAVIADAIAAGGSSLKDHIQADGSLGYFQHAFSVYDRAGEACRKPGCDGTVTRIVQAGRSTFHCPRCQK.

P2 serves as the catalytic Schiff-base intermediate with DNA. E3 serves as the catalytic Proton donor. The active-site Proton donor; for beta-elimination activity is K58. DNA is bound by residues H104, R126, and K169. The FPG-type zinc finger occupies 260 to 296; the sequence is SVYDRAGEACRKPGCDGTVTRIVQAGRSTFHCPRCQK. R286 (proton donor; for delta-elimination activity) is an active-site residue.

This sequence belongs to the FPG family. Monomer. It depends on Zn(2+) as a cofactor.

The enzyme catalyses Hydrolysis of DNA containing ring-opened 7-methylguanine residues, releasing 2,6-diamino-4-hydroxy-5-(N-methyl)formamidopyrimidine.. It carries out the reaction 2'-deoxyribonucleotide-(2'-deoxyribose 5'-phosphate)-2'-deoxyribonucleotide-DNA = a 3'-end 2'-deoxyribonucleotide-(2,3-dehydro-2,3-deoxyribose 5'-phosphate)-DNA + a 5'-end 5'-phospho-2'-deoxyribonucleoside-DNA + H(+). Functionally, involved in base excision repair of DNA damaged by oxidation or by mutagenic agents. Acts as a DNA glycosylase that recognizes and removes damaged bases. Has a preference for oxidized purines, such as 7,8-dihydro-8-oxoguanine (8-oxoG). Has AP (apurinic/apyrimidinic) lyase activity and introduces nicks in the DNA strand. Cleaves the DNA backbone by beta-delta elimination to generate a single-strand break at the site of the removed base with both 3'- and 5'-phosphates. In Sinorhizobium fredii (strain NBRC 101917 / NGR234), this protein is Formamidopyrimidine-DNA glycosylase.